Here is a 323-residue protein sequence, read N- to C-terminus: Methenyltetrahydromethanopterin cyclohydrolase (323 aa).

The protein belongs to the MCH family. Homodimer.

The protein localises to the cytoplasm. It carries out the reaction 5,10-methenyl-5,6,7,8-tetrahydromethanopterin + H2O = N(5)-formyl-5,6,7,8-tetrahydromethanopterin + H(+). It participates in one-carbon metabolism; formaldehyde degradation; formate from formaldehyde (H(4)MPT route): step 3/5. Catalyzes the hydrolysis of methenyl-H(4)MPT(+) to 5-formyl-H(4)MPT. The polypeptide is Methenyltetrahydromethanopterin cyclohydrolase (mch) (Methylorubrum extorquens (strain ATCC 14718 / DSM 1338 / JCM 2805 / NCIMB 9133 / AM1) (Methylobacterium extorquens)).